The following is a 41-amino-acid chain: Iota-conotoxin-like r11d (41 aa).

Disulfide bonds link cysteine 2–cysteine 16, cysteine 9–cysteine 19, cysteine 15–cysteine 24, and cysteine 18–cysteine 35. Proline 8 is modified (4-hydroxyproline). Residue proline 26 is modified to 4-hydroxyproline.

In terms of processing, position 41 corresponds to a L-threonine, and not a D-threonine as firstly supposed. In terms of tissue distribution, expressed by the venom duct.

Its subcellular location is the secreted. Functionally, iota-conotoxins bind to voltage-gated sodium channels (Nav) and act as agonists by shifting the voltage-dependence of activation to more hyperpolarized levels. Both natural (L-Thr form) and synthetic (D-Thr form) peptides cause paralysis and death following intracranial injection and grooming and hypersensitivity upon intraperitoneal injection into mice. The L-Thr form of the peptide is 7-fold more potent than the D-Thr form. Both natural peptide (L-Thr form) and synthetic peptide (D-Thr form) are active on nerve, and on muscle. The protein is Iota-conotoxin-like r11d of Conus radiatus (Rayed cone).